We begin with the raw amino-acid sequence, 76 residues long: MAIGTPAHEFRELNEEELVTRLNEAKEELFNLRFQLATGQLTNNRRLRTVKRDIARIYTVIRERELGLSVVPGAEA.

The protein belongs to the universal ribosomal protein uL29 family.

This is Large ribosomal subunit protein uL29 from Corynebacterium glutamicum (strain R).